Reading from the N-terminus, the 581-residue chain is MKASQFFIATLKEAPADAEVKSHQLMMRAGMIKRLGAGIYNYMPMGLRVIRKVEAIIREEMNRAGAVELLMPVVQPAELWQETGRFDKMGPELLRVKDRHDRDFIIQPTSEEVVTDIARQELRSYKQLPKNFYHIQTKFRDERRPRFGIMRGREFTMKDAYSFDRDAASAARSYDAMFAAYKRIFDRFGLQYRAVAADTGAIGGDLSHEFQVIADTGEDAIVYCPTSDYAANIELAEAVSLIAERGAATESMAKTPTPGKSTCADVAQLLNLPLARTVKSLVLATDELNEAGDVAKTTVWLLLVRGDHDMNEVKVGKVDGLKAGFRFATVAEIESHFGCKPGYLGPIGLKKPVKVIADRTVAQMADFICGANEIDFHLTGINWGRDLPEPDAVADIRNVVEGDPSPDGQGVLAIQRGIEVGHVFFLGTKYSKAMNATYLDENGKPQFMEMGCYGIGVTRILGAAIEQKHDARGILWPDAIAPFTVVVCPIGYDRSAEVKAAADALHDELQAAGIDVMLDDRGERPGAMFADWELIGVPHRVVISDRGLKAGQVEYQGRCDEAASTVPAAEVAAFVKGRLRS.

The protein belongs to the class-II aminoacyl-tRNA synthetase family. ProS type 1 subfamily. As to quaternary structure, homodimer.

Its subcellular location is the cytoplasm. The catalysed reaction is tRNA(Pro) + L-proline + ATP = L-prolyl-tRNA(Pro) + AMP + diphosphate. Functionally, catalyzes the attachment of proline to tRNA(Pro) in a two-step reaction: proline is first activated by ATP to form Pro-AMP and then transferred to the acceptor end of tRNA(Pro). As ProRS can inadvertently accommodate and process non-cognate amino acids such as alanine and cysteine, to avoid such errors it has two additional distinct editing activities against alanine. One activity is designated as 'pretransfer' editing and involves the tRNA(Pro)-independent hydrolysis of activated Ala-AMP. The other activity is designated 'posttransfer' editing and involves deacylation of mischarged Ala-tRNA(Pro). The misacylated Cys-tRNA(Pro) is not edited by ProRS. The protein is Proline--tRNA ligase of Leptothrix cholodnii (strain ATCC 51168 / LMG 8142 / SP-6) (Leptothrix discophora (strain SP-6)).